The following is a 488-amino-acid chain: H2.0-like homeobox protein (488 aa).

2 disordered regions span residues 118–173 and 331–488; these read AYHH…SSKD and WRHS…LGCL. Low complexity-rich tracts occupy residues 125-135 and 158-171; these read QQQQQQQQPQQ and PNPH…APSS. The homeobox DNA-binding region spans 276–335; that stretch reads RSWSRAVFSNLQRKGLEKRFEIQKYVTKPDRKQLAAMLGLTDAQVKVWFQNRRMKWRHSK. 2 stretches are compositionally biased toward basic and acidic residues: residues 334–349 and 363–372; these read SKEA…EAGE and DERSPSRSEG. Acidic residues predominate over residues 373–383; sequence EAESESSDSES. The span at 390-401 shows a compositional bias: basic and acidic residues; sequence DTERTEGSERSL. The segment covering 422–432 has biased composition (gly residues); that stretch reads GSGGSSGGGGN. Over residues 433-454 the composition is skewed to low complexity; it reads SFSFSSASSLSSSSTSAGCASS.

Belongs to the H2.0 homeobox family. As to expression, low level in normal B and T-cells, high level in activated lymphocytes and monocytes. Also found in thymus, tonsil, bone marrow, developing vessels, and fetal brain.

The protein resides in the nucleus. Functionally, transcription factor required for TBX21/T-bet-dependent maturation of Th1 cells as well as maintenance of Th1-specific gene expression. Involved in embryogenesis and hematopoiesis. This Homo sapiens (Human) protein is H2.0-like homeobox protein (HLX).